Here is a 147-residue protein sequence, read N- to C-terminus: Cysteine proteinase inhibitor 2 (147 aa).

The first 27 residues, 1–27 (MATMLKVSLVLSLLGFLVIAVVTPSAA), serve as a signal peptide directing secretion. A Cystatin domain is found at 87-117 (LQFSRVVSAQKQVVAGLKYYLRIEVTQPNGS). The short motif at 98–102 (QVVAG) is the Secondary area of contact element. The N-linked (GlcNAc...) asparagine glycan is linked to N115.

It belongs to the cystatin family. Phytocystatin subfamily.

The protein resides in the secreted. Specific inhibitor of cysteine proteinases. Probably involved in the regulation of endogenous processes and in defense against pests and pathogens. The polypeptide is Cysteine proteinase inhibitor 2 (CYS2) (Arabidopsis thaliana (Mouse-ear cress)).